The primary structure comprises 300 residues: GTPase Era (300 aa).

The region spanning 8–176 (RCGYVAIVGR…EAQIAKHLPE (169 aa)) is the Era-type G domain. Residues 16–23 (GRPNVGKS) form a G1 region. Residue 16-23 (GRPNVGKS) participates in GTP binding. The tract at residues 42-46 (QTTRH) is G2. Residues 63 to 66 (DTPG) form a G3 region. GTP-binding positions include 63–67 (DTPGM) and 125–128 (NKTD). Residues 125–128 (NKTD) are G4. The interval 155–157 (ISA) is G5. The KH type-2 domain maps to 199–283 (VREKIMRQLG…MLNLWVKVKG (85 aa)).

This sequence belongs to the TRAFAC class TrmE-Era-EngA-EngB-Septin-like GTPase superfamily. Era GTPase family. As to quaternary structure, monomer.

It is found in the cytoplasm. The protein resides in the cell inner membrane. In terms of biological role, an essential GTPase that binds both GDP and GTP, with rapid nucleotide exchange. Plays a role in 16S rRNA processing and 30S ribosomal subunit biogenesis and possibly also in cell cycle regulation and energy metabolism. The sequence is that of GTPase Era from Pseudomonas entomophila (strain L48).